The primary structure comprises 490 residues: GTPase Der (490 aa).

EngA-type G domains lie at 3–166 (PVVA…MDDV) and 203–376 (IKLA…DSST). Residues 9–16 (GRPNVGKS), 56–60 (DTGGI), 118–121 (NKTD), 209–216 (GRPNVGKS), 256–260 (DTAGV), and 321–324 (NKWD) contribute to the GTP site. One can recognise a KH-like domain in the interval 377–461 (RRVSTAMLTR…PIRIQFKEGE (85 aa)).

The protein belongs to the TRAFAC class TrmE-Era-EngA-EngB-Septin-like GTPase superfamily. EngA (Der) GTPase family. Associates with the 50S ribosomal subunit.

In terms of biological role, GTPase that plays an essential role in the late steps of ribosome biogenesis. The chain is GTPase Der from Salmonella typhi.